A 285-amino-acid chain; its full sequence is Phosphate import ATP-binding protein PstB (285 aa).

In terms of domain architecture, ABC transporter spans 39–280 (LEVSDLQLWY…PAKKQTEDYI (242 aa)). 71–78 (GPSGCGKS) serves as a coordination point for ATP.

The protein belongs to the ABC transporter superfamily. Phosphate importer (TC 3.A.1.7) family. In terms of assembly, the complex is composed of two ATP-binding proteins (PstB), two transmembrane proteins (PstC and PstA) and a solute-binding protein (PstS).

The protein resides in the cell inner membrane. The enzyme catalyses phosphate(out) + ATP + H2O = ADP + 2 phosphate(in) + H(+). In terms of biological role, part of the ABC transporter complex PstSACB involved in phosphate import. Responsible for energy coupling to the transport system. The sequence is that of Phosphate import ATP-binding protein PstB from Alkalilimnicola ehrlichii (strain ATCC BAA-1101 / DSM 17681 / MLHE-1).